The following is a 507-amino-acid chain: Maturase K (507 aa).

The protein belongs to the intron maturase 2 family. MatK subfamily.

It is found in the plastid. Its subcellular location is the chloroplast. In terms of biological role, usually encoded in the trnK tRNA gene intron. Probably assists in splicing its own and other chloroplast group II introns. In Magnolia figo (Banana shrub), this protein is Maturase K.